The following is a 1577-amino-acid chain: Probable serine/threonine-protein kinase gdt9 (1577 aa).

The N-terminal stretch at 1-16 (MKTFLLIFLLICVCKG) is a signal peptide. Over 17–966 (ITNITTPSIY…NNEDNHKKLV (950 aa)) the chain is Extracellular. A helical membrane pass occupies residues 967 to 987 (IALSVSIPVAALLVILCFGIF). Topologically, residues 988–1577 (ICYNNNKKNK…SLVKIFKRFN (590 aa)) are cytoplasmic. A compositionally biased stretch (basic and acidic residues) spans 998–1014 (NETKGKDIETNTDKKDD). Disordered regions lie at residues 998–1019 (NETK…NENE) and 1050–1128 (TLPP…FPTI). Over residues 1050 to 1082 (TLPPQSTISIDTSPSSENTTFTESLTPKKSATV) the composition is skewed to polar residues. The span at 1091 to 1115 (NSTNESTVSNSSSENNSDNNNNNNN) shows a compositional bias: low complexity. Positions 1290 to 1573 (LDFDEICGQG…EIVFSLVKIF (284 aa)) constitute a Protein kinase domain. ATP is bound by residues 1296–1304 (CGQGTYGMV) and Lys-1317. The active-site Proton acceptor is the Asp-1436.

It in the N-terminal section; belongs to the GDT family. The protein in the C-terminal section; belongs to the protein kinase superfamily. TKL Ser/Thr protein kinase family.

The protein localises to the membrane. The enzyme catalyses L-seryl-[protein] + ATP = O-phospho-L-seryl-[protein] + ADP + H(+). It carries out the reaction L-threonyl-[protein] + ATP = O-phospho-L-threonyl-[protein] + ADP + H(+). In Dictyostelium discoideum (Social amoeba), this protein is Probable serine/threonine-protein kinase gdt9 (gdt9).